Reading from the N-terminus, the 335-residue chain is Probable pectinesterase 29 (335 aa).

Residues 1–24 form the signal peptide; the sequence is MGTHRIFIGLIALCCFCLPHLIEA. A glycan (N-linked (GlcNAc...) asparagine) is linked at Asn43. Asp166 (proton donor) is an active-site residue. The active-site Nucleophile is Asp187. The substrate site is built by Arg248 and Trp250. N-linked (GlcNAc...) asparagine glycosylation occurs at Asn262.

The protein belongs to the pectinesterase family. As to expression, expressed in flower buds.

It localises to the secreted. The protein localises to the cell wall. It catalyses the reaction [(1-&gt;4)-alpha-D-galacturonosyl methyl ester](n) + n H2O = [(1-&gt;4)-alpha-D-galacturonosyl](n) + n methanol + n H(+). It participates in glycan metabolism; pectin degradation; 2-dehydro-3-deoxy-D-gluconate from pectin: step 1/5. In terms of biological role, acts in the modification of cell walls via demethylesterification of cell wall pectin. The protein is Probable pectinesterase 29 (PME29) of Arabidopsis thaliana (Mouse-ear cress).